The sequence spans 153 residues: Xanthine-guanine phosphoribosyltransferase (153 aa).

5-phospho-alpha-D-ribose 1-diphosphate is bound by residues 37–38, R69, and 88–96; these read RG and DDLVDTGGT. R69 provides a ligand contact to GMP. Mg(2+) is bound at residue D89. Residues D92 and I135 each contribute to the guanine site. Residues D92 and I135 each contribute to the xanthine site. GMP contacts are provided by residues 92–96 and 134–135; these read DTGGT and WI.

It belongs to the purine/pyrimidine phosphoribosyltransferase family. XGPT subfamily. As to quaternary structure, homotetramer. Mg(2+) serves as cofactor.

Its subcellular location is the cell inner membrane. The enzyme catalyses GMP + diphosphate = guanine + 5-phospho-alpha-D-ribose 1-diphosphate. It carries out the reaction XMP + diphosphate = xanthine + 5-phospho-alpha-D-ribose 1-diphosphate. It catalyses the reaction IMP + diphosphate = hypoxanthine + 5-phospho-alpha-D-ribose 1-diphosphate. The protein operates within purine metabolism; GMP biosynthesis via salvage pathway; GMP from guanine: step 1/1. Its pathway is purine metabolism; XMP biosynthesis via salvage pathway; XMP from xanthine: step 1/1. Functionally, purine salvage pathway enzyme that catalyzes the transfer of the ribosyl-5-phosphate group from 5-phospho-alpha-D-ribose 1-diphosphate (PRPP) to the N9 position of the 6-oxopurines guanine and xanthine to form the corresponding ribonucleotides GMP (guanosine 5'-monophosphate) and XMP (xanthosine 5'-monophosphate), with the release of PPi. To a lesser extent, also acts on hypoxanthine. The chain is Xanthine-guanine phosphoribosyltransferase from Photorhabdus laumondii subsp. laumondii (strain DSM 15139 / CIP 105565 / TT01) (Photorhabdus luminescens subsp. laumondii).